The following is a 331-amino-acid chain: Peroxidase 69 (331 aa).

The first 23 residues, Met-1–Ala-23, serve as a signal peptide directing secretion. Intrachain disulfides connect Cys-46/Cys-122, Cys-79/Cys-84, Cys-128/Cys-327, and Cys-205/Cys-237. Catalysis depends on His-77, which acts as the Proton acceptor. The Ca(2+) site is built by Asp-78, Val-81, Gly-83, Asp-85, and Ser-87. A glycan (N-linked (GlcNAc...) asparagine) is linked at Asn-93. Pro-168 contributes to the substrate binding site. Residue His-198 participates in heme b binding. Residue Thr-199 participates in Ca(2+) binding. An N-linked (GlcNAc...) asparagine glycan is attached at Asn-216. Ca(2+) contacts are provided by Asp-248, Ser-251, and Asp-256.

This sequence belongs to the peroxidase family. Classical plant (class III) peroxidase subfamily. Heme b is required as a cofactor. Requires Ca(2+) as cofactor. In terms of tissue distribution, mainly expressed in roots and slightly in leaves.

The protein resides in the secreted. It catalyses the reaction 2 a phenolic donor + H2O2 = 2 a phenolic radical donor + 2 H2O. Removal of H(2)O(2), oxidation of toxic reductants, biosynthesis and degradation of lignin, suberization, auxin catabolism, response to environmental stresses such as wounding, pathogen attack and oxidative stress. These functions might be dependent on each isozyme/isoform in each plant tissue. This is Peroxidase 69 (PER69) from Arabidopsis thaliana (Mouse-ear cress).